We begin with the raw amino-acid sequence, 285 residues long: Putative ABC transporter ATP-binding protein CPE0195 (285 aa).

The ABC transporter domain occupies 6 to 242 (LKVEELNYNY…KEVIRKVNLR (237 aa)). An ATP-binding site is contributed by 39–46 (GGNGVGKS).

This sequence belongs to the ABC transporter superfamily.

The protein resides in the cell membrane. In terms of biological role, probably part of an ABC transporter complex. Responsible for energy coupling to the transport system. This Clostridium perfringens (strain 13 / Type A) protein is Putative ABC transporter ATP-binding protein CPE0195.